The sequence spans 197 residues: uncharacterized protein (197 aa).

The region spanning 29 to 166 (DWSVHTVSLD…FTNLILEMID (138 aa)) is the PfpI endopeptidase domain. Cys-98 acts as the Nucleophile in catalysis.

Belongs to the peptidase C56 family.

This is an uncharacterized protein from Bacillus subtilis (strain 168).